The chain runs to 335 residues: MTTVLGIEGTAWNLSAAIVDEDDVIAEVTETYRPKTGGIHPREAAQHHALHASDVIERLLKEYRDKGHSPENIDAIAFSQGPGLGACLRTVATSARALALSLDIPLVGVNHCIGHVEIGRWKTPAVDPVVLYVSGGNSQVLAHRAGKYRIFGETLDIGIGNALDKFARGAGLTHPGGPKVEEYARKATNYVKMPYVVKGMDFSFSGLSTAATDALKDNSLEDVCYSFQENAFAMLVEVTERALAHTGKSEVLLAGGVGANMRLREMLDLMCEDRGASFYVPERRFMGDNGAMIAYTGLLMFNSGTTLPIENSHVDPSFRPDTVDVTWIADEKEVL.

Fe cation-binding residues include H111, H115, and Y132. Substrate is bound by residues 132 to 136, D164, G177, E181, and N260; that span reads YVSGG. Fe cation is bound at residue D288.

The protein belongs to the KAE1 / TsaD family. Monomer. Component of the KEOPS complex that consists of Kae1, Bud32, Cgi121 and Pcc1; the whole complex dimerizes. Requires Fe(2+) as cofactor.

The protein resides in the cytoplasm. The enzyme catalyses L-threonylcarbamoyladenylate + adenosine(37) in tRNA = N(6)-L-threonylcarbamoyladenosine(37) in tRNA + AMP + H(+). Functionally, required for the formation of a threonylcarbamoyl group on adenosine at position 37 (t(6)A37) in tRNAs that read codons beginning with adenine. Is a component of the KEOPS complex that is probably involved in the transfer of the threonylcarbamoyl moiety of threonylcarbamoyl-AMP (TC-AMP) to the N6 group of A37. Kae1 likely plays a direct catalytic role in this reaction, but requires other protein(s) of the complex to fulfill this activity. The protein is tRNA N6-adenosine threonylcarbamoyltransferase of Methanococcoides burtonii (strain DSM 6242 / NBRC 107633 / OCM 468 / ACE-M).